The chain runs to 291 residues: Segregation and condensation protein A (291 aa).

The protein belongs to the ScpA family. Component of a cohesin-like complex composed of ScpA, ScpB and the Smc homodimer, in which ScpA and ScpB bind to the head domain of Smc. The presence of the three proteins is required for the association of the complex with DNA.

Its subcellular location is the cytoplasm. Its function is as follows. Participates in chromosomal partition during cell division. May act via the formation of a condensin-like complex containing Smc and ScpB that pull DNA away from mid-cell into both cell halves. The sequence is that of Segregation and condensation protein A from Malacoplasma penetrans (strain HF-2) (Mycoplasma penetrans).